Reading from the N-terminus, the 205-residue chain is Glycerol-3-phosphate acyltransferase (205 aa).

A run of 6 helical transmembrane segments spans residues 7 to 27 (MTAL…VWVC), 54 to 74 (VVPA…VLWV), 80 to 100 (LPIW…SYPL), 116 to 136 (VLLM…ALLA), 141 to 161 (TAAV…YWLA), and 163 to 183 (EATL…AWNI).

Belongs to the PlsY family. Probably interacts with PlsX.

Its subcellular location is the cell inner membrane. The enzyme catalyses an acyl phosphate + sn-glycerol 3-phosphate = a 1-acyl-sn-glycero-3-phosphate + phosphate. It functions in the pathway lipid metabolism; phospholipid metabolism. In terms of biological role, catalyzes the transfer of an acyl group from acyl-phosphate (acyl-PO(4)) to glycerol-3-phosphate (G3P) to form lysophosphatidic acid (LPA). This enzyme utilizes acyl-phosphate as fatty acyl donor, but not acyl-CoA or acyl-ACP. This chain is Glycerol-3-phosphate acyltransferase, found in Chromohalobacter salexigens (strain ATCC BAA-138 / DSM 3043 / CIP 106854 / NCIMB 13768 / 1H11).